The following is a 163-amino-acid chain: Protein GOLVEN 3 (163 aa).

An N-terminal signal peptide occupies residues 1-20; sequence MMRFTIIVIAFLLIIQSLEE. The propeptide occupies 21–141; that stretch reads EHILVYAHEG…MEKLARLLRD (121 aa). Y143 carries the sulfotyrosine modification. The tract at residues 144–163 is disordered; it reads PIYSKPRRKPPVNNRAPDKF. At P154 the chain carries Hydroxyproline. A propeptide spanning residues 158–163 is cleaved from the precursor; sequence RAPDKF.

It belongs to the RGF family. In terms of assembly, binds to LRR receptor-like serine/threonine-protein kinases RGI1, RGI2 and RGI3 to trigger their dimerization with SERK proteins and subsequent signaling. Expressed in roots, specifically in the root apical meristem (RAM).

It localises to the secreted. In terms of biological role, signaling peptide (root growth factor) required during root gravitropism in a PIN2-traffic dependent manner, thus influencing the formation of auxin gradients. Maintains the postembryonic root stem cell niche. This chain is Protein GOLVEN 3, found in Arabidopsis thaliana (Mouse-ear cress).